The chain runs to 396 residues: MILHVDMDAFYASVEQRDRPELRGRPVVVGGSEGRGVVTAASYEAREYGIHSAMPGSRAIKLCPHADFVRGRLDHYASVGRAVREIFHRFTPVVQPLSLDEAFLDVSGTIRLHGSPREIGINIRETIRRELDLPASVGIAPLKFVAKIASDIGKPNGFVEVPADGVREFLDPLPVSRLWGVGKVGQTKLQRLGYRTIADLRVKDLDALKSQLGRWGEHLWNLANGIDRRQVVVDHLAKGIGHERTFAEDLSDIESLNAVVSYLSEQTARRLRRARRLASTITLKYRREDFQTFSRARKLSTPTDSTLEILQVAEELLLEMRSREPRSVRLLGISLGGLTDADAPKQLHLFGEETGENASSKVDTLSDQIATKLGKHSLYRASSHQWVDRKNTKPKN.

In terms of domain architecture, UmuC spans 2–182; sequence ILHVDMDAFY…LPVSRLWGVG (181 aa). Mg(2+) is bound by residues D6 and D100. The active site involves E101.

It belongs to the DNA polymerase type-Y family. In terms of assembly, monomer. Mg(2+) is required as a cofactor.

The protein resides in the cytoplasm. The enzyme catalyses DNA(n) + a 2'-deoxyribonucleoside 5'-triphosphate = DNA(n+1) + diphosphate. Poorly processive, error-prone DNA polymerase involved in untargeted mutagenesis. Copies undamaged DNA at stalled replication forks, which arise in vivo from mismatched or misaligned primer ends. These misaligned primers can be extended by PolIV. Exhibits no 3'-5' exonuclease (proofreading) activity. May be involved in translesional synthesis, in conjunction with the beta clamp from PolIII. This chain is DNA polymerase IV, found in Rhodopirellula baltica (strain DSM 10527 / NCIMB 13988 / SH1).